The sequence spans 119 residues: Holo-[acyl-carrier-protein] synthase (119 aa).

Residues Asp-8 and Glu-50 each contribute to the Mg(2+) site.

This sequence belongs to the P-Pant transferase superfamily. AcpS family. Mg(2+) is required as a cofactor.

Its subcellular location is the cytoplasm. It catalyses the reaction apo-[ACP] + CoA = holo-[ACP] + adenosine 3',5'-bisphosphate + H(+). Functionally, transfers the 4'-phosphopantetheine moiety from coenzyme A to a Ser of acyl-carrier-protein. This chain is Holo-[acyl-carrier-protein] synthase, found in Clavibacter michiganensis subsp. michiganensis (strain NCPPB 382).